Consider the following 422-residue polypeptide: 3-phosphoshikimate 1-carboxyvinyltransferase (422 aa).

3-phosphoshikimate is bound by residues K21, S22, and R26. K21 lines the phosphoenolpyruvate pocket. Residues G93 and R121 each coordinate phosphoenolpyruvate. 3-phosphoshikimate is bound by residues S166, S167, Q168, S194, D310, and K337. Phosphoenolpyruvate is bound at residue Q168. D310 acts as the Proton acceptor in catalysis. 3 residues coordinate phosphoenolpyruvate: R341, R382, and K407.

This sequence belongs to the EPSP synthase family. Monomer.

Its subcellular location is the cytoplasm. It catalyses the reaction 3-phosphoshikimate + phosphoenolpyruvate = 5-O-(1-carboxyvinyl)-3-phosphoshikimate + phosphate. It participates in metabolic intermediate biosynthesis; chorismate biosynthesis. Functionally, catalyzes the transfer of the enolpyruvyl moiety of phosphoenolpyruvate (PEP) to the 5-hydroxyl of shikimate-3-phosphate (S3P) to produce enolpyruvyl shikimate-3-phosphate and inorganic phosphate. This chain is 3-phosphoshikimate 1-carboxyvinyltransferase, found in Methanoculleus marisnigri (strain ATCC 35101 / DSM 1498 / JR1).